The sequence spans 404 residues: Probable tRNA sulfurtransferase (404 aa).

The 106-residue stretch at 60 to 165 (HEVAESLKEI…DEAAYISYEN (106 aa)) folds into the THUMP domain. ATP-binding positions include 183–184 (ML), 208–209 (HF), Arg265, Gly287, and Gln296.

The protein belongs to the ThiI family.

The protein localises to the cytoplasm. It catalyses the reaction [ThiI sulfur-carrier protein]-S-sulfanyl-L-cysteine + a uridine in tRNA + 2 reduced [2Fe-2S]-[ferredoxin] + ATP + H(+) = [ThiI sulfur-carrier protein]-L-cysteine + a 4-thiouridine in tRNA + 2 oxidized [2Fe-2S]-[ferredoxin] + AMP + diphosphate. The catalysed reaction is [ThiS sulfur-carrier protein]-C-terminal Gly-Gly-AMP + S-sulfanyl-L-cysteinyl-[cysteine desulfurase] + AH2 = [ThiS sulfur-carrier protein]-C-terminal-Gly-aminoethanethioate + L-cysteinyl-[cysteine desulfurase] + A + AMP + 2 H(+). It functions in the pathway cofactor biosynthesis; thiamine diphosphate biosynthesis. In terms of biological role, catalyzes the ATP-dependent transfer of a sulfur to tRNA to produce 4-thiouridine in position 8 of tRNAs, which functions as a near-UV photosensor. Also catalyzes the transfer of sulfur to the sulfur carrier protein ThiS, forming ThiS-thiocarboxylate. This is a step in the synthesis of thiazole, in the thiamine biosynthesis pathway. The sulfur is donated as persulfide by IscS. This chain is Probable tRNA sulfurtransferase, found in Streptococcus agalactiae serotype Ia (strain ATCC 27591 / A909 / CDC SS700).